We begin with the raw amino-acid sequence, 780 residues long: Cullin-5 (780 aa).

Serine 34 carries the post-translational modification Phosphoserine. A Phosphothreonine modification is found at threonine 210. The region spanning 713-772 (LRTRKLYIQIMKMRKKISNAQLQTELVEILKNMFLPQKKMIKEQIEWLIEHKYIRRDESD) is the Cullin neddylation domain. A Glycyl lysine isopeptide (Lys-Gly) (interchain with G-Cter in NEDD8) cross-link involves residue lysine 724.

Belongs to the cullin family. Component of multiple cullin-5-RING E3 ubiquitin-protein ligase complexes (ECS complexes, also named CRL5 complexes) formed of CUL5, Elongin BC (ELOB and ELOC), RNF7/RBX2 and a variable SOCS box domain-containing protein as substrate-specific recognition component. CUL5-containing ECS complexes specifically contain RNF7/RBX2, and not RBX1, as catalytic subunit. Component of the ECS(ASB2) complex with the substrate recognition component ASB2. Component of the ECS(ASB6) complex with the substrate recognition component ASB6. Component of the ECS(ASB7) complex with the substrate recognition component ASB7. Component of the ECS(ASB9) complex with the substrate recognition component ASB9. Component of the ECS(ASB11) complex with the substrate recognition component ASB11. Component of the ECS(ASB12) complex with the substrate recognition component ASB12. Component of the ECS(LRRC41) complex with the substrate recognition component LRRC41. Component of the ECS(SOCS1) complex with the substrate recognition component SOCS1. Component of the ECS(SOCS2) complex with the substrate recognition component SOCS2. Component of the ECS(WSB1) complex with the substrate recognition subunit WSB1. Component of the ECS(SOCS3) complex with the substrate recognition component SOCS3. Component of the ECS(SOCS7) complex with the substrate recognition component SOCS7. Component of the ECS(SPSB1) complex with the substrate recognition component SPSB1. Component of the ECS(SPSB3) complex with the substrate recognition component SPSB3. Component of the ECS(SPSB2) complex with the substrate recognition component SPSB2. Component of the ECS(SPSB4) complex with the substrate recognition component SPSB4. Component of the ECS(RAB40) complex with the substrate recognition subunit RAB40A, RAB40B or RAB40C. Component of the ECS(KLHDC1) complex with the substrate recognition component KLHDC1. Component of the ECS(PCMTD1) complex with the substrate recognition subunit PCMTD1. May also form complexes containing RBX1 and ELOA or VHL; additional evidence is however required to confirm this result in vivo. Interacts (when neddylated) with ARIH2; leading to activate the E3 ligase activity of ARIH2. Interacts with ERCC6; the interaction is induced by DNA damaging agents or inhibitors of RNA polymerase II elongation. Interacts with ELOA (via the BC-box). Interacts (unneddylated form) with DCUN1D1, DCUN1D2, DCUN1D3, DCUN1D4 and DCUN1D5; these interactions promote the cullin neddylation. Post-translationally, neddylated; which enhances the ubiquitination activity of ECS complexes and prevents binding of the inhibitor CAND1. Deneddylated via its interaction with the COP9 signalosome (CSN). As to expression, kidney collecting tubules.

It localises to the nucleus. It participates in protein modification; protein ubiquitination. Core component of multiple cullin-5-RING E3 ubiquitin-protein ligase complexes (ECS complexes, also named CRL5 complexes), which mediate the ubiquitination and subsequent proteasomal degradation of target proteins. Acts a scaffold protein that contributes to catalysis through positioning of the substrate and the ubiquitin-conjugating enzyme. The functional specificity of the E3 ubiquitin-protein ligase complex depends on the variable SOCS box-containing substrate recognition component. Acts as a key regulator of neuron positioning during cortex development: component of various SOCS-containing ECS complexes, such as the ECS(SOCS7) complex, that regulate reelin signaling by mediating ubiquitination and degradation of DAB1. ECS(SOCS1) seems to direct ubiquitination of JAK2. The ECS(SOCS2) complex mediates the ubiquitination and subsequent proteasomal degradation of phosphorylated EPOR and GHR. The ECS(SPSB3) complex catalyzes ubiquitination of nuclear CGAS. ECS(KLHDC1) complex is part of the DesCEND (destruction via C-end degrons) pathway and mediates ubiquitination and degradation of truncated SELENOS selenoprotein produced by failed UGA/Sec decoding, which ends with a glycine. The ECS(ASB9) complex mediates ubiquitination and degradation of CKB. As part of some ECS complex, promotes 'Lys-11'-linked ubiquitination and degradation of BTRC. As part of a multisubunit ECS complex, polyubiquitinates monoubiquitinated POLR2A. As part of the ECS(RAB40C) complex, mediates ANKRD28 ubiquitination and degradation, thereby regulating protein phosphatase 6 (PP6) complex activity and focal adhesion assembly during cell migration. As part of the ECS(RAB40A) complex, mediates RHOU 'Lys-48'-linked ubiquitination and degradation, thus inhibiting focal adhesion disassembly during cell migration. As part of the ECS(RAB40B) complex, mediates LIMA1/EPLIN and RAP2 ubiquitination, thereby regulating actin cytoskeleton dynamics and stress fiber formation during cell migration. May form a cell surface vasopressin receptor. The polypeptide is Cullin-5 (CUL5) (Oryctolagus cuniculus (Rabbit)).